Here is a 208-residue protein sequence, read N- to C-terminus: Fusaric acid resistance protein FusD (208 aa).

The helical transmembrane segment at 7 to 29 threads the bilayer; the sequence is LLLSMLVSAIAFAVLFPPTAPWL.

It localises to the cell membrane. In terms of biological role, involved in the resistance (detoxification) of the fungal toxin fusaric acid. The chain is Fusaric acid resistance protein FusD (fusD) from Burkholderia cepacia (Pseudomonas cepacia).